The following is a 288-amino-acid chain: Thiamine-monophosphate kinase (288 aa).

Positions 20, 30, and 32 each coordinate Mg(2+). A substrate-binding site is contributed by D39. Mg(2+) contacts are provided by D60 and D107. ATP contacts are provided by residues 106–107 and R130; that span reads GD. Mg(2+) is bound at residue D188. S190 lines the ATP pocket. D191 lines the Mg(2+) pocket. Residue W286 coordinates substrate.

Belongs to the thiamine-monophosphate kinase family.

The enzyme catalyses thiamine phosphate + ATP = thiamine diphosphate + ADP. It participates in cofactor biosynthesis; thiamine diphosphate biosynthesis; thiamine diphosphate from thiamine phosphate: step 1/1. Functionally, catalyzes the ATP-dependent phosphorylation of thiamine-monophosphate (TMP) to form thiamine-pyrophosphate (TPP), the active form of vitamin B1. This chain is Thiamine-monophosphate kinase, found in Halobacterium salinarum (strain ATCC 700922 / JCM 11081 / NRC-1) (Halobacterium halobium).